We begin with the raw amino-acid sequence, 247 residues long: tRNA (guanine-N(1)-)-methyltransferase (247 aa).

S-adenosyl-L-methionine contacts are provided by residues Gly-112 and 132 to 137; that span reads IGDFVL.

This sequence belongs to the RNA methyltransferase TrmD family. As to quaternary structure, homodimer.

Its subcellular location is the cytoplasm. The catalysed reaction is guanosine(37) in tRNA + S-adenosyl-L-methionine = N(1)-methylguanosine(37) in tRNA + S-adenosyl-L-homocysteine + H(+). Its function is as follows. Specifically methylates guanosine-37 in various tRNAs. The sequence is that of tRNA (guanine-N(1)-)-methyltransferase from Geotalea uraniireducens (strain Rf4) (Geobacter uraniireducens).